The chain runs to 4684 residues: Plectin (4684 aa).

Residues 1–1470 (MVAGMLMPRD…SELTTLTSQY (1470 aa)) form a globular 1 region. A phosphoserine mark is found at phenylalanine 20 and arginine 21. Residue valine 26 is modified to Phosphotyrosine. Glycine 42 bears the Phosphoserine mark. Threonine 113 is modified (phosphothreonine). Phosphoserine is present on residues serine 125 and serine 149. The segment at 144 to 179 (ELEEVSPETPVVPATTQRTLARPGPEPAPATDERDR) is disordered. An actin-binding region spans residues 175 to 400 (DERDRVQKKT…YVSSLYDAMP (226 aa)). Calponin-homology (CH) domains follow at residues 179 to 282 (RVQK…LHFQ) and 295 to 400 (MTAK…DAMP). The stretch at 645–710 (LQSVQRRPEL…SIEEFRAKIE (66 aa)) is one Spectrin 1 repeat. Position 720 is a phosphoserine (serine 720). Spectrin repeat units follow at residues 740–824 (KLLN…REDH) and 837–930 (LQTQ…AVVQ). The region spanning 941–998 (RGRLPLLAVCDYKQVEVTVHKGDECQLVGPAQPSHWKVLSSSGSEAAVPSVCFLVPPP) is the SH3 domain. The segment at 964 to 4574 (ECQLVGPAQP…VGAYSKYLTC (3611 aa)) is required for interaction with intermediate filament proteins. Serine 1047 carries the phosphoserine modification. A Spectrin 4 repeat occupies 1315–1415 (RERVAQLLER…QRFAKQYINA (101 aa)). Serine 1435 is modified (phosphoserine). A coiled-coil region spans residues 1469–2756 (QYIKFISETL…AHSEEVTASQ (1288 aa)). Positions 1471–2755 (IKFISETLRR…LAHSEEVTAS (1285 aa)) are central fibrous rod domain. The interval 1618–1650 (RAEEAEAQKRQAQEEAERLRRQVQDESQRKRQA) is disordered. The residue at position 1721 (serine 1721) is a Phosphoserine. Position 1725 is an N6-acetyllysine (lysine 1725). Serine 1732 is subject to Phosphoserine. Disordered stretches follow at residues 1794–1836 (LAQA…KQRQ), 2105–2139 (EAAR…EAAR), and 2217–2307 (RGEA…MEKH). Composition is skewed to basic and acidic residues over residues 1798–1836 (EAEK…KQRQ), 2105–2128 (EAAR…ERVQ), and 2217–2258 (RGEA…KQSA). Over residues 2259–2272 (EEQAQARAQAQAAA) the composition is skewed to low complexity. Basic and acidic residues predominate over residues 2273–2288 (EKLRKEAEQEAARRAQ). Serine 2631 carries the phosphoserine modification. Residue lysine 2636 is modified to N6-acetyllysine. 2 disordered regions span residues 2668–2707 (REEQ…RRKQ) and 2763–2784 (LPNG…HSFD). Basic and acidic residues predominate over residues 2679–2707 (EQERQRLVASMEEARRRQHEAEEGVRRKQ). The globular 2 stretch occupies residues 2756-4684 (QVAATKTLPN…SLGGPESAVA (1929 aa)). A phosphoserine mark is found at serine 2782 and serine 2802. 5 Plectin repeats span residues 2826 to 2863 (RHYL…PGTA), 2864 to 2901 (LILL…PELH), 2902 to 2939 (HKLL…REHG), 2940 to 2977 (IRLL…EEMN), and 2981 to 3015 (ADPS…PETG). The residue at position 2886 (threonine 2886) is a Phosphothreonine. Phosphotyrosine is present on tyrosine 3033. Serine 3036 bears the Phosphoserine mark. Lysine 3053 and lysine 3091 each carry N6-acetyllysine. Plectin repeat units follow at residues 3116–3153 (SLVP…VDTV), 3154–3191 (RRAL…SDMA), 3192–3229 (VALL…PEFH), 3230–3267 (EKLL…REQG), 3268–3305 (LRLL…EETS), and 3306–3343 (RALS…QLTG). The disordered stretch occupies residues 3310–3331 (APRADAKAYSDPSTGEPATYGE). Tyrosine 3362 carries the phosphotyrosine modification. Lysine 3420 bears the N6-acetyllysine mark. Plectin repeat units lie at residues 3485-3522 (RTLL…ATTA), 3523-3560 (ALLL…PELH), 3561-3598 (EQLL…RQHG), 3599-3636 (IRLL…EEMN), and 3640-3674 (ADPS…PETG). Serine 3580 is subject to Phosphoserine. The residue at position 3785 (threonine 3785) is a Phosphothreonine. Plectin repeat units lie at residues 3820 to 3857 (WCYL…AEVA), 3858 to 3895 (RLLL…PELH), 3896 to 3933 (DRLL…TEEA), 3934 to 3971 (LRLL…KDTH), and 3975 to 4008 (SEPS…DGTG). Positions 3956 to 4293 (PLEVAYQRGY…ETGKEMSVYE (338 aa)) are required for interaction with type2 keratins, DES and VIM. Position 4030 is a phosphothreonine (threonine 4030). Serine 4054 is modified (phosphoserine). Plectin repeat units lie at residues 4063 to 4100 (QKFL…PGTA), 4101 to 4138 (FELL…PEFK), 4139 to 4176 (DKLL…KDHG), 4177 to 4214 (IRLL…EEMN), 4218 to 4252 (TDPS…PQTG), 4265 to 4305 (RKTS…HQTY), and 4319 to 4356 (TISS…RSAL). Residues 4250 to 4300 (QTGLCLLPLKEKKRERKTSSKSSVRKRRVVIVDPETGKEMSVYEAYRKGLI) are binding to intermediate filaments. Serine 4382, serine 4384, serine 4385, serine 4386, serine 4389, serine 4390, serine 4391, and serine 4392 each carry phosphoserine. Position 4393 is a phosphotyrosine (tyrosine 4393). Residues serine 4396, serine 4400, and serine 4406 each carry the phosphoserine modification. 5 Plectin repeats span residues 4408–4445 (SDPT…NITG), 4446–4483 (QRLL…KIMV), 4484–4521 (DRIN…YEAG), 4522–4559 (QRFL…ARTA), and 4560–4597 (QKLR…EGTG). Threonine 4411 bears the Phosphothreonine mark. Residues 4505–4574 (MSAAQALKKG…VGAYSKYLTC (70 aa)) form a required for efficient interaction with KRT5 and KRT14 heterodimers region. A Phosphothreonine; by CDK1 modification is found at threonine 4539. Phosphoserine is present on residues serine 4607 and serine 4613. Residues 4611–4678 (YYSPYSVSGS…ASGSSASLGG (68 aa)) are compositionally biased toward low complexity. Residues 4611-4684 (YYSPYSVSGS…SLGGPESAVA (74 aa)) are disordered. Residue tyrosine 4615 is modified to Phosphotyrosine. 3 positions are modified to phosphoserine: serine 4616, serine 4618, and serine 4622. Threonine 4623 is modified (phosphothreonine). The segment at 4625–4640 (GSRTGSRTGSRAGSRR) is 4 X 4 AA tandem repeats of G-S-R-X. Position 4626 is a phosphoserine (serine 4626). Omega-N-methylarginine occurs at positions 4627 and 4640. A phosphoserine mark is found at serine 4642, serine 4672, and serine 4675.

It belongs to the plakin or cytolinker family. As to quaternary structure, homodimer or homotetramer. Interacts (via actin-binding domain) with SYNE3. Interacts (via calponin-homology (CH) 1 domain) with VIM (via rod region). Interacts (via N-terminus) with DST isoform 2 (via N-terminus). Interacts with FER. Interacts with TOR1A. Interacts with ANK3. Identified in complexes that contain VIM, EZR, AHNAK, BFSP1, BFSP2, ANK2, PLEC, PRX and spectrin. Interacts with COL17A1. Interacts with KRT14, heterodimers consisting of KRT8 and KRT18, heterodimers consisting of KRT5 and KRT14, heterodimers consisting of KRT14 and KRT15, and heterodimers consisting of KRT1 and KRT10. Interacts with DES and VIM. Post-translationally, phosphorylated by CDK1; regulates dissociation from intermediate filaments during mitosis. In terms of tissue distribution, widely expressed with highest levels in muscle, heart, placenta and spinal cord.

The protein resides in the cytoplasm. Its subcellular location is the cytoskeleton. The protein localises to the cell junction. It localises to the hemidesmosome. It is found in the cell projection. The protein resides in the podosome. Functionally, interlinks intermediate filaments with microtubules and microfilaments and anchors intermediate filaments to desmosomes or hemidesmosomes. Could also bind muscle proteins such as actin to membrane complexes in muscle. May be involved not only in the filaments network, but also in the regulation of their dynamics. Structural component of muscle. Isoform 9 plays a major role in the maintenance of myofiber integrity. The polypeptide is Plectin (PLEC) (Homo sapiens (Human)).